Reading from the N-terminus, the 431-residue chain is Enolase (431 aa).

Gln167 provides a ligand contact to (2R)-2-phosphoglycerate. Glu209 (proton donor) is an active-site residue. Residues Asp246, Glu289, and Asp316 each coordinate Mg(2+). Lys341, Arg370, Ser371, and Lys392 together coordinate (2R)-2-phosphoglycerate. The Proton acceptor role is filled by Lys341.

The protein belongs to the enolase family. Component of the RNA degradosome, a multiprotein complex involved in RNA processing and mRNA degradation. Mg(2+) is required as a cofactor.

It is found in the cytoplasm. The protein localises to the secreted. It localises to the cell surface. The enzyme catalyses (2R)-2-phosphoglycerate = phosphoenolpyruvate + H2O. It functions in the pathway carbohydrate degradation; glycolysis; pyruvate from D-glyceraldehyde 3-phosphate: step 4/5. Catalyzes the reversible conversion of 2-phosphoglycerate (2-PG) into phosphoenolpyruvate (PEP). It is essential for the degradation of carbohydrates via glycolysis. This is Enolase from Shewanella sp. (strain ANA-3).